The primary structure comprises 360 residues: GDP-mannose transporter (360 aa).

Over 1 to 49 the chain is Cytoplasmic; sequence MSSSETKGRNEEDVAEIKKAIATGAVKDPSNLSAIPPIFVVSGANFSMN. A helical transmembrane segment spans residues 50–67; that stretch reads FLLLCIQSSVCCACVFAV. Residues 68–84 are Lumenal-facing; the sequence is KKLGIISFRDFDMKDAK. Residues 85–105 traverse the membrane as a helical segment; the sequence is MWFPISFLLVSVIYTGSKSLQ. Residues 106 to 110 are Cytoplasmic-facing; sequence YLSIP. The helical transmembrane segment at 111–131 threads the bilayer; the sequence is VYTIFKNLTIILIAYGEVLWF. At 132–134 the chain is on the lumenal side; the sequence is GGR. Residues 135 to 155 form a helical membrane-spanning segment; that stretch reads VTALTFVSFIFMVISSIIAAW. At 156–164 the chain is on the cytoplasmic side; that stretch reads SDVQSALAS. A helical transmembrane segment spans residues 165–185; sequence SIPGASSGVSVGAMQSLFGAL. Residue Arg186 is a topological domain, lumenal. The chain crosses the membrane as a helical span at residues 187–207; the sequence is GLNVGYFWMLVNCLTSAAYVL. Residues 208–220 are Cytoplasmic-facing; that stretch reads SMRKRIKSTGFSD. A helical transmembrane segment spans residues 221–241; it reads WDTMFYNNLLSIPVLAVFSLI. The Lumenal portion of the chain corresponds to 242-260; it reads AEDWGRENLNRNFPAETRN. Residues 261-281 form a helical membrane-spanning segment; sequence FLLFAIAFSGAAAVGISYTTA. Residues 282 to 291 are Cytoplasmic-facing; sequence WCVRVTSSTT. Residues 292–312 traverse the membrane as a helical segment; the sequence is YSMVGALNKLPVAASGMLFFG. At 313–314 the chain is on the lumenal side; it reads DP. Residues 315–335 traverse the membrane as a helical segment; it reads VTVGSVSAVGVGFFAGIVYAV. At 336–360 the chain is on the cytoplasmic side; that stretch reads AKNNQKKNERRQAADAIIPMASRKP.

It belongs to the TPT transporter family. SLC35D subfamily. In terms of assembly, homooligomer.

The protein resides in the golgi apparatus membrane. It is found in the cytoplasmic vesicle membrane. It localises to the endoplasmic reticulum membrane. Functionally, involved in the import of GDP-mannose from the cytoplasm into the Golgi lumen. This Coprinopsis cinerea (strain Okayama-7 / 130 / ATCC MYA-4618 / FGSC 9003) (Inky cap fungus) protein is GDP-mannose transporter (VRG4).